Consider the following 56-residue polypeptide: MAVEEIVKVSRNYQVTIPAKVRQKFQIKEGDLVKVTFDESGGVVKIQLLDSKTDAH.

The SpoVT-AbrB domain maps to 4–51 (EEIVKVSRNYQVTIPAKVRQKFQIKEGDLVKVTFDESGGVVKIQLLDS).

The chain is Repressor-like protein SSo7c4 from Saccharolobus solfataricus (strain ATCC 35092 / DSM 1617 / JCM 11322 / P2) (Sulfolobus solfataricus).